The sequence spans 420 residues: Phosphoribosylamine--glycine ligase (420 aa).

The region spanning 108-314 is the ATP-grasp domain; it reads KEIMVKYGVP…FAQNITDILD (207 aa). Position 134-195 (134-195) interacts with ATP; the sequence is IEKHGAPIVV…EEFLEGEEFS (62 aa). 2 residues coordinate Mg(2+): E284 and N286.

Belongs to the GARS family. Mg(2+) is required as a cofactor. The cofactor is Mn(2+).

It carries out the reaction 5-phospho-beta-D-ribosylamine + glycine + ATP = N(1)-(5-phospho-beta-D-ribosyl)glycinamide + ADP + phosphate + H(+). It participates in purine metabolism; IMP biosynthesis via de novo pathway; N(1)-(5-phospho-D-ribosyl)glycinamide from 5-phospho-alpha-D-ribose 1-diphosphate: step 2/2. In Streptococcus pneumoniae serotype 4 (strain ATCC BAA-334 / TIGR4), this protein is Phosphoribosylamine--glycine ligase.